The sequence spans 83 residues: Small ribosomal subunit protein bS16 (83 aa).

The protein belongs to the bacterial ribosomal protein bS16 family.

This Azoarcus sp. (strain BH72) protein is Small ribosomal subunit protein bS16.